A 302-amino-acid polypeptide reads, in one-letter code: MTQKIKCALIGPGNIGTDLLAKLQRSPVLEPVWMVGIDPESDGLKRAREMGIKTTHEGVDGLIPHMKADGVQIVFDATSAYVHAENSRKVNAQGALMIDLTPAAIGPFCVPPVNLKEHVGKAEMNVNMVTCGGQATIPMVAAVSRVQPVAYGEIVATVSSRSAGPGTRKNIDEFTRTTAGAIEKVGGAQKGKAIIIINPADPPLIMRDTVHCLVEGEPDKEAITRSIHDMLAEVQKYVPGYKLVNGPVFDGNRVSVFLEVEGLGDYLPKYAGNLDIMTAAAARTAEMFAEEILAGKLTLQAA.

The active-site Acyl-thioester intermediate is the cysteine 131. NAD(+) is bound by residues 162–170 (SAGPGTRKN) and asparagine 273.

It belongs to the acetaldehyde dehydrogenase family.

The enzyme catalyses acetaldehyde + NAD(+) + CoA = acetyl-CoA + NADH + H(+). This chain is Acetaldehyde dehydrogenase, found in Acidovorax sp. (strain JS42).